A 196-amino-acid chain; its full sequence is Holliday junction branch migration complex subunit RuvA (196 aa).

The domain I stretch occupies residues 1 to 63 (MINKIHGKVI…ENELKLFGFL (63 aa)). The domain II stretch occupies residues 64–139 (NSDERETFKS…KLLINNELES (76 aa)). Position 139 (S139) is a region of interest, flexible linker. The domain III stretch occupies residues 139-196 (SSLFGFKELEESIVSMGFDRKIVNSKLKEACDLIEFSNLKDSEKEQFLFKEVLKRMSN).

Belongs to the RuvA family. As to quaternary structure, homotetramer. Forms an RuvA(8)-RuvB(12)-Holliday junction (HJ) complex. HJ DNA is sandwiched between 2 RuvA tetramers; dsDNA enters through RuvA and exits via RuvB. An RuvB hexamer assembles on each DNA strand where it exits the tetramer. Each RuvB hexamer is contacted by two RuvA subunits (via domain III) on 2 adjacent RuvB subunits; this complex drives branch migration. In the full resolvosome a probable DNA-RuvA(4)-RuvB(12)-RuvC(2) complex forms which resolves the HJ.

The protein resides in the cytoplasm. The RuvA-RuvB-RuvC complex processes Holliday junction (HJ) DNA during genetic recombination and DNA repair, while the RuvA-RuvB complex plays an important role in the rescue of blocked DNA replication forks via replication fork reversal (RFR). RuvA specifically binds to HJ cruciform DNA, conferring on it an open structure. The RuvB hexamer acts as an ATP-dependent pump, pulling dsDNA into and through the RuvAB complex. HJ branch migration allows RuvC to scan DNA until it finds its consensus sequence, where it cleaves and resolves the cruciform DNA. The polypeptide is Holliday junction branch migration complex subunit RuvA (Borrelia garinii subsp. bavariensis (strain ATCC BAA-2496 / DSM 23469 / PBi) (Borreliella bavariensis)).